Consider the following 1488-residue polypeptide: Chromosome partition protein MukB (1488 aa).

Gly34–Ser41 contributes to the ATP binding site. 3 coiled-coil regions span residues Leu326–Gln418, Leu444–His472, and Arg509–Pro602. The segment at Pro666 to Arg783 is flexible hinge. 3 coiled-coil regions span residues Glu835–Glu923, Glu977–Gly1116, and Val1209–Val1265. Residues Ala1049 to Arg1074 are disordered. Basic and acidic residues predominate over residues Ser1051–His1065.

The protein belongs to the SMC family. MukB subfamily. In terms of assembly, homodimerization via its hinge domain. Binds to DNA via its C-terminal region. Interacts, and probably forms a ternary complex, with MukE and MukF via its C-terminal region. The complex formation is stimulated by calcium or magnesium. Interacts with tubulin-related protein FtsZ.

The protein resides in the cytoplasm. Its subcellular location is the nucleoid. Functionally, plays a central role in chromosome condensation, segregation and cell cycle progression. Functions as a homodimer, which is essential for chromosome partition. Involved in negative DNA supercoiling in vivo, and by this means organize and compact chromosomes. May achieve or facilitate chromosome segregation by condensation DNA from both sides of a centrally located replisome during cell division. This Salmonella agona (strain SL483) protein is Chromosome partition protein MukB.